The chain runs to 215 residues: Adenylate kinase (215 aa).

10–15 (GTGKGT) contributes to the ATP binding site. The interval 30-59 (STGHILRKISTKKTLFGEKIKNIINSGKLV) is NMP. AMP is bound by residues Thr31, Arg36, 57-59 (KLV), 85-88 (GFPR), and Gln92. The LID stretch occupies residues 122-157 (TRTINPITGTIYNNVIQKNSELKNLKINTLKSRLDD). ATP contacts are provided by residues Arg123 and 132 to 133 (IY). AMP-binding residues include Arg154 and Arg165. Position 198 (Asn198) interacts with ATP.

The protein belongs to the adenylate kinase family. Monomer.

Its subcellular location is the cytoplasm. It carries out the reaction AMP + ATP = 2 ADP. The protein operates within purine metabolism; AMP biosynthesis via salvage pathway; AMP from ADP: step 1/1. Functionally, catalyzes the reversible transfer of the terminal phosphate group between ATP and AMP. Plays an important role in cellular energy homeostasis and in adenine nucleotide metabolism. In Buchnera aphidicola subsp. Baizongia pistaciae (strain Bp), this protein is Adenylate kinase.